Here is a 296-residue protein sequence, read N- to C-terminus: Homeobox protein SIX2 (296 aa).

Positions 124–183 form a DNA-binding region, homeobox; that stretch reads GEETSYCFKEKSRSVLREWYAHNPYPSPREKRELAEATGLTTTQVSNWFKNRRQRDRAAE. A disordered region spans residues 168-284; it reads VSNWFKNRRQ…HHHSLQDSIL (117 aa). The span at 179-190 shows a compositional bias: basic and acidic residues; sequence DRAAEAKERENS. Low complexity-rich tracts occupy residues 191-206 and 228-237; these read ENSN…SSLN and HSSSSPALLL. Residues 254–264 show a composition bias toward pro residues; sequence PPGPSAVPVPV.

Belongs to the SIX/Sine oculis homeobox family. As to quaternary structure, interacts with TCF7L2; in a canonical Wnt signaling independent manner; prevents transcription of differentiation genes in cap mesenchyme. Interacts with OSR1; form a strong repressor complex with TCF7L2, TLE2 and TLE3 to prevent the activation of Wnt/beta-catenin target genes in the cap mesenchyme. Interacts with HOXA11, EYA1 and EYA3. In terms of tissue distribution, expressed in phalangeal tendons, in smooth muscle and in head and body mesenchyme.

Its subcellular location is the nucleus. Transcription factor that plays an important role in the development of several organs, including kidney, skull and stomach. During kidney development, maintains cap mesenchyme multipotent nephron progenitor cells in an undifferentiated state by opposing the inductive signals emanating from the ureteric bud and cooperates with WNT9B to promote renewing progenitor cells proliferation. Acts through its interaction with TCF7L2 and OSR1 in a canonical Wnt signaling independent manner preventing transcription of differentiation genes in cap mesenchyme such as WNT4. Also acts independently of OSR1 to activate expression of many cap mesenchyme genes, including itself, GDNF and OSR1. During craniofacial development plays a role in growth and elongation of the cranial base through regulation of chondrocyte differentiation. During stomach organogenesis, controls pyloric sphincter formation and mucosal growth through regulation of a gene network including NKX2-5, BMPR1B, BMP4, SOX9 and GREM1. During branchial arch development, acts to mediate HOXA2 control over the insulin-like growth factor pathway. May also be involved in limb tendon and ligament development. Plays a role in cell proliferation and migration. In Mus musculus (Mouse), this protein is Homeobox protein SIX2 (Six2).